A 763-amino-acid chain; its full sequence is Exo-1,4-beta-xylosidase bxlB (763 aa).

An N-terminal signal peptide occupies residues 1-23 (MAVFKSWNLALLSSLFIPALCQS). Asn63 carries an N-linked (GlcNAc...) asparagine glycan. Residue Asp288 is part of the active site. Residues Asn340, Asn408, Asn419, Asn458, Asn621, and Asn760 are each glycosylated (N-linked (GlcNAc...) asparagine).

Belongs to the glycosyl hydrolase 3 family.

Its subcellular location is the secreted. It catalyses the reaction Hydrolysis of (1-&gt;4)-beta-D-xylans, to remove successive D-xylose residues from the non-reducing termini.. The protein operates within glycan degradation; xylan degradation. Its function is as follows. Xylan 1,4-beta-xylosidase involved in the hydrolysis of xylan, a major structural heterogeneous polysaccharide found in plant biomass representing the second most abundant polysaccharide in the biosphere, after cellulose. Active against rye arabinoxylan and xylohexaose, but not paranitrophenyl-beta-xyloside. The polypeptide is Exo-1,4-beta-xylosidase bxlB (bxlB) (Emericella nidulans (strain FGSC A4 / ATCC 38163 / CBS 112.46 / NRRL 194 / M139) (Aspergillus nidulans)).